Here is a 299-residue protein sequence, read N- to C-terminus: Riboflavin transporter ImpX (299 aa).

2 consecutive EamA domains span residues 6–144 and 162–294; these read KGAL…YLLT and SLYS…SIIK. The next 10 helical transmembrane spans lie at 7–27, 34–54, 68–88, 101–121, 129–149, 158–178, 202–222, 224–244, 253–273, and 276–296; these read GALLVCLAATMWGFDGIALTP, VPFVVFILHLLPLILMSILFG, DLFFFFCVALFGGCLGTLCIV, VVTLLQKLQPIFAIILARLLL, YLFWGFLALLGGYLLTFEFHL, LLPASLYSLLAAFSFGSATVF, IMFVIVTFTSGFGDFLVATAG, WLIFVIIALTTGSGAILLYYF, VATMCELCFPISSVVFDYLIN, and VLSPVQIASAILMIISIIKIS.

Belongs to the EamA transporter family.

Its subcellular location is the cell membrane. Functionally, transports riboflavin into the cell. This is Riboflavin transporter ImpX from Fusobacterium nucleatum subsp. nucleatum (strain ATCC 23726 / VPI 4351).